Consider the following 497-residue polypeptide: MPYILSIDQGTTSSRAIVFDANGHACGQAQKEFRQYFPEDGWVEHDAMEIWNDTLAMCQQALRNARVEAQQLVAIGITNQRETTVLWDRETGDPLARAIVWQDRRTASTCEALRDQGHENQVRSKTGLLLDPYFSATKLAWLLDNVPNARQRAEAGELAFGTIDSWLLWQLTRGKVHATDATNASRTLLFNIHEQCWDEELLTLFNVPASVLPDVRDSAADFGTTCPELLGAAVPVTGIAGDQQAALVGQACFAPGMVKSTYGTGCFMVMNTGEAVESHNRLLTTVGYRLNGKTTYALEGSIFVAGAAIQWLRDGLHLIRDARETEALARRVGSAGGVYLVPAFTGLGAPWWDPHARGALMGLTRDTGIAEVVTAGLEAVCYQSRDLLDAMAADCGTRPTTLRVDGGMVVNNWLSQTLSDVLGVCVDRPVVTETTALGAAYLAGLGVGLYASLESIAEQWRCERGFSPALAEPERQKRYQGWRDAVARVCQTSRGAN.

Residue threonine 11 coordinates ADP. Threonine 11, threonine 12, and serine 13 together coordinate ATP. Threonine 11 provides a ligand contact to sn-glycerol 3-phosphate. Arginine 15 contacts ADP. Sn-glycerol 3-phosphate contacts are provided by arginine 81, glutamate 82, tyrosine 133, and aspartate 242. Glycerol is bound by residues arginine 81, glutamate 82, tyrosine 133, aspartate 242, and glutamine 243. ADP contacts are provided by threonine 264 and glycine 306. The ATP site is built by threonine 264, glycine 306, glutamine 310, and glycine 407. ADP is bound by residues glycine 407 and asparagine 411.

The protein belongs to the FGGY kinase family.

The catalysed reaction is glycerol + ATP = sn-glycerol 3-phosphate + ADP + H(+). The protein operates within polyol metabolism; glycerol degradation via glycerol kinase pathway; sn-glycerol 3-phosphate from glycerol: step 1/1. Its activity is regulated as follows. Inhibited by fructose 1,6-bisphosphate (FBP). Key enzyme in the regulation of glycerol uptake and metabolism. Catalyzes the phosphorylation of glycerol to yield sn-glycerol 3-phosphate. The polypeptide is Glycerol kinase (Alcanivorax borkumensis (strain ATCC 700651 / DSM 11573 / NCIMB 13689 / SK2)).